Consider the following 79-residue polypeptide: Major outer membrane lipoprotein Lpp 3 (79 aa).

The first 21 residues, 1–21 (MNRTNKLILGAVVLGSALLAG), serve as a signal peptide directing secretion. C22 carries N-palmitoyl cysteine lipidation. Residue C22 is the site of S-diacylglycerol cysteine attachment. 2 repeats span residues 25–35 (NAKIDQLSSDV) and 39–49 (SAKVDQLSNDV). Residues 28–76 (IDQLSSDVQTLSAKVDQLSNDVNAMRSDVQAAKDDAARANQRLDNKVLR) adopt a coiled-coil conformation. K79 carries the N6-murein peptidoglycan lysine modification.

It belongs to the Lpp family. As to quaternary structure, homotrimer.

It localises to the cell outer membrane. The protein localises to the secreted. Its subcellular location is the cell wall. In terms of biological role, a highly abundant outer membrane lipoprotein that controls the distance between the inner and outer membranes. The only protein known to be covalently linked to the peptidoglycan network (PGN). Also non-covalently binds the PGN. The link between the cell outer membrane and PGN contributes to maintenance of the structural and functional integrity of the cell envelope, and maintains the correct distance between the PGN and the outer membrane. The sequence is that of Major outer membrane lipoprotein Lpp 3 from Salmonella paratyphi A (strain ATCC 9150 / SARB42).